Reading from the N-terminus, the 530-residue chain is Negative elongation factor A (530 aa).

The HDAg domain occupies 89–248; the sequence is WVLMVADILK…TPIPPSRTPL (160 aa). Residues 125-188 are NELF-C/D-binding; sequence REKVSECEAS…LQKSTETAQQ (64 aa). T157 is modified (phosphothreonine). The segment at 189 to 248 is RNAPII-binding; sequence LKRSAGVPFHAKGRGLLRKMDTTTPLKGIPKQAPFRSPTTPSVFSPSGNRTPIPPSRTPL. 3 disordered regions span residues 213 to 248, 266 to 296, and 312 to 409; these read PLKGIPKQAPFRSPTTPSVFSPSGNRTPIPPSRTPL, GAGREAKRRRKTLDTEVVEKPTKEETVVENA, and SLNS…TAQT. Phosphoserine occurs at positions 225 and 233. Polar residues predominate over residues 225-238; it reads SPTTPSVFSPSGNR. T277 carries the phosphothreonine modification. Positions 277-291 are enriched in basic and acidic residues; sequence TLDTEVVEKPTKEET. The segment covering 315–341 has biased composition (low complexity); sequence SEPTLPSTSYLPSTPSVVPASSYIPSS. Residue S363 is modified to Phosphoserine.

The protein belongs to the NELF-A family. In terms of assembly, the NELF complex is composed of NELFA, NELFB, NELFCD and NELFE; NELFA and NELFCD form a stable subcomplex that binds to the N-terminus of NELFB. In vitro, the NELFA:NELFCD subcomplex binds to ssDNA and ssRNA in a sequence- and structure-dependent manner. Interacts with the RNA polymerase II complex when it is not phosphorylated by P-TEFb. Interacts with NELFB. Ubiquitous. Expressed in brain, heart, spleen, lung, liver, muscle, kidney and testis. Already expressed in 7 dpc embryos.

The protein resides in the nucleus. Its function is as follows. Essential component of the NELF complex, a complex that negatively regulates the elongation of transcription by RNA polymerase II. The NELF complex, which acts via an association with the DSIF complex and causes transcriptional pausing, is counteracted by the P-TEFb kinase complex. The polypeptide is Negative elongation factor A (Nelfa) (Mus musculus (Mouse)).